We begin with the raw amino-acid sequence, 361 residues long: RuBisCO accumulation factor 1 (361 aa).

The interval 16–197 is N-terminal alpha-helix; sequence NELAQELLRK…RKQIEQLLVD (182 aa). Residues 221–347 form a C-terminal beta-sheet region; that stretch reads PRIVPVVGQL…VIILVRPRRI (127 aa).

It belongs to the RAF family. As to quaternary structure, homodimer. Forms an RbcL(8)-Raf1(8) complex. Each Raf1 dimer clamps the exterior of an RbcL dimer, protecting it. The extreme C-terminus (residues 354-361) inserts into the catalytic pocket of RbcL where the Glu-361 forms a salt bridge with 'Lys-202'. This insertion probably contributes to the assembly of RbcL(8). Forms complexes of many stoichiometries with RbcL with and without RbcS. RbcX and Raf1 can bind simultaneously to RbcL.

It localises to the cytoplasm. In terms of biological role, a major RuBisCO chaperone. Acts after GroEL-GroES chaperonin to fold and/or assemble the large subunit of RuBisCO (ccbL, rbcL). Cooperates with RbcX in RbcL folding, plays the major role in assembly of dimers into RbcL(8)-Raf1(8) intermediate complexes. RbcS replaces Raf1, leading to holoenzyme formation. Its function is as follows. In vitro acts as an antagonist to CcmM35, suggesting it might regulate RuBisCO condensation and decondensation. The chain is RuBisCO accumulation factor 1 from Nostoc sp. (strain PCC 7120 / SAG 25.82 / UTEX 2576).